The sequence spans 138 residues: Salivary protein 15 Iper-3 (138 aa).

The signal sequence occupies residues 1–21 (MESFVAMKVVCITVLFVIVAV). N-linked (GlcNAc...) asparagine glycans are attached at residues asparagine 30, asparagine 42, asparagine 68, asparagine 107, and asparagine 127. The segment at 119 to 138 (GPNGQKCANKSQCVGHIPGC) is CD4-binding.

The protein belongs to the salp15 family. As to quaternary structure, interacts with host CD4. Interacts with host DC-SIGN (CD209). Interacts with Borrelia outer surface protein C (OspC). In terms of tissue distribution, expressed in salivary glands.

It is found in the secreted. Salivary tick protein that downregulates host immune system by binding to both dendritic cells, and CD4(+) T cells. Specifically binds to the CD4 coreceptor on T cells. This interaction prevents the activation of the Src kinase, Lck, and its downstream substrate Zap-70, and results in deficient activation of PLCgamma1, the repression of calcium fluxes triggered by T-cell antigen receptor (TCR) ligation, and a subsequent reduction in interleukin-2 production. This salivary protein also binds to DC-SIGN (CD209) on dendritic cells (DC) and activates the Raf-1 kinase/MEK signaling pathway that results in down-regulating expression of pro-inflammatory cytokines. Furthermore, it inhibits T cell proliferation induced by DCs. It also inhibits in vitro keratinocyte inflammation induced by Borrelia burgdorferi or by the major outer surface protein (OspC) of Borrelia. In addition, it downregulates chemokines and monocyte chemoattractant protein 1, as well as several antimicrobial peptides such as defensins, cathelicidin, psoriasin, and RNase 7. Apart from its immunomodulatory activities, it is also associated with protection of Borrelia spirochetes from antibody-mediated killing through its binding to OspC. In vivo, tests on different immune disease animal models show promising therapeutic results, e.g., in inhibiting HIV infection, experimental autoimmune encephalomyelitis, transplantation rejection, and asthma. In Ixodes persulcatus (Taiga tick), this protein is Salivary protein 15 Iper-3.